The chain runs to 166 residues: Protein SprT (166 aa).

In terms of domain architecture, SprT-like spans 21–160; that stretch reads ANQHFSREFP…CQQCQQTLAF (140 aa). His74 contributes to the Zn(2+) binding site. Glu75 is an active-site residue. Residue His78 participates in Zn(2+) binding.

This sequence belongs to the SprT family. The cofactor is Zn(2+).

The protein resides in the cytoplasm. The sequence is that of Protein SprT from Vibrio atlanticus (strain LGP32) (Vibrio splendidus (strain Mel32)).